A 76-amino-acid chain; its full sequence is Esculentin-2-ALa (76 aa).

The N-terminal stretch at 1 to 22 (MFTLKKSMLLLFFLGTISLSLC) is a signal peptide. The propeptide occupies 23–39 (EEERNADEDDGEKEVKR). A disulfide bond links cysteine 70 and cysteine 76.

In terms of tissue distribution, expressed by the skin glands.

It is found in the secreted. In terms of biological role, antimicrobial peptide with activity against Gram-positive and Gram-negative bacteria and against fungi. Has been tested against S.aureus (MIC=2.5 ug/mL), B.pumilus (MIC=2.5 ug/mL), B.cereus (MIC=7.5 ug/mL), E.coli (MIC=12.5 ug/mL), B.dysenteriae (MIC=7.5 ug/mL), A.cacoaceticus (MIC=25.0 ug/mL), P.aeruginosa (MIC=50.0 ug/mL) and C.albicans (MIC=2.5 ug/mL). Also shows a weak hemolytic activity. This chain is Esculentin-2-ALa, found in Amolops loloensis (Lolokou Sucker Frog).